Here is a 497-residue protein sequence, read N- to C-terminus: Keratin, type II cytoskeletal 8 (497 aa).

The head stretch occupies residues 2–108; sequence TSYQRTVTVR…DPRIGQVRLE (107 aa). Residues 109–149 form a coil 1A region; the sequence is EKEQIKTLNNQFAGFIDKVRYLEQQNKLLETKWQLLQNQTT. One can recognise an IF rod domain in the interval 109-421; it reads EKEQIKTLNN…KLLEGEESRL (313 aa). The linker 1 stretch occupies residues 145–162; the sequence is QNQTTPSRSNLDSMFEAY. Residues 163-254 are coil 1B; the sequence is ISNLRRQLDT…QIYDEEIREL (92 aa). Residues 255–278 are linker 12; the sequence is QTQIQDTSVIVQMDNNRQLDLDNI. Residues 279–417 form a coil 2 region; it reads IAEVRAQYED…ATYRKLLEGE (139 aa). A tail region spans residues 418-497; the sequence is ESRLASGIQA…VSERSNIVKE (80 aa).

It belongs to the intermediate filament family. In terms of assembly, heterotetramer of two type I and two type II keratins. Keratin-8 associates with keratin-18. Expressed in skin.

It is found in the cytoplasm. Its subcellular location is the nucleus. It localises to the nucleoplasm. The protein localises to the nucleus matrix. Functionally, together with KRT19, helps to link the contractile apparatus to dystrophin at the costameres of striated muscle. The chain is Keratin, type II cytoskeletal 8 from Protopterus aethiopicus (Marbled lungfish).